The primary structure comprises 180 residues: Fanconi anemia core complex-associated protein 20 (180 aa).

Residues 1–17 (MEAARRPRLGLSRRRPR) are compositionally biased toward basic residues. 2 disordered regions span residues 1 to 28 (MEAA…GRPW) and 106 to 135 (GAGG…VEQQ). Phosphoserine occurs at positions 113 and 137. Residues 144-180 (LRSCPMCQKEFAPRLTQLDVDSHLAQCLAESTEDVTW) form a UBZ2-type zinc finger. Zn(2+)-binding residues include Cys-147, Cys-150, His-166, and Cys-170.

In terms of assembly, component of the Fanconi anemia (FA) complex. Interacts with FANCA; interaction is direct. Interacts with REV1. Reported to bind monoubiquitinated REV1; however it binds better to non-ubiquitinated REV1.

The protein resides in the nucleus. It localises to the chromosome. Its function is as follows. Component of the Fanconi anemia (FA) complex required to recruit the FA complex to DNA interstrand cross-links (ICLs) and promote ICLs repair. Following DNA damage recognizes and binds 'Lys-63'-linked ubiquitin generated by RNF8 at ICLs and recruits other components of the FA complex. Promotes translesion synthesis via interaction with REV1. This chain is Fanconi anemia core complex-associated protein 20, found in Homo sapiens (Human).